The sequence spans 238 residues: IkB-like protein (238 aa).

4 ANK repeats span residues 47 to 76 (NGSS…YPGE), 86 to 119 (DGNS…RICL), 123 to 152 (NGIT…DPTQ), and 157 to 186 (RGFT…KPLY). A Nuclear localization signal motif is present at residues 80–86 (PHRRDKD). The short motif at 202-213 (KKKPKIIITGCK) is the Nuclear localization signal element. The PxIxITxC motif; Interaction with host PPP3CA motif lies at 205–212 (PKIIITGC). The FLCV motif motif lies at 227–230 (FLCV).

It belongs to the asfivirus A238L family. Interacts with host PPIA. Interacts with host PPP3CA/Calcineurin. Interacts with host RELA/p65; interaction of the 32 kDa form with host RELA results in the formation of a stable complex with NF-kappa-B. Interacts with host PPP3R1. Interacts with host EP300; this interaction inhibits the association of host EP300 with host RELA, JUN and NFATC2. The protein exists in a 28 kDa and a 32 kDa form, probably due to post-translational modifications which are neither phosphorylation, nor sumoylation.

Its subcellular location is the host nucleus. The protein localises to the host cytoplasm. In terms of biological role, ikB-like protein that inhibits the binding of NF-kappa-B to DNA, thereby downregulating pro-inflammatory cytokine production. Forms a heterodimer with the NF-kappa-B subunit RELA/p65 and prevents the activation of the NF-kappa-B transcription factor. Inhibits calcineurin function, which is required for the induction of nuclear factor of activated T cells (NFAT)-dependent immune response genes. Prevents the binding of substrates to calcineurin without affecting the phosphatase activity. Does not contain the serine residues that are phosphorylated by host IkB kinase and thus is not degraded following stimulation of the NFkB pathway. The sequence is that of IkB-like protein (A238L) from African swine fever virus (isolate Warthog/Namibia/Wart80/1980) (ASFV).